A 1360-amino-acid polypeptide reads, in one-letter code: Activating molecule in BECN1-regulated autophagy protein 1B (1360 aa).

WD repeat units follow at residues 50–89 (DNPR…CLHS), 92–132 (GHRR…ESWF), and 134–174 (ESNV…AVVK). Positions 249-258 (RSSGAQANDQ) are enriched in polar residues. Disordered regions lie at residues 249–277 (RSSG…FQYP), 315–364 (PTGL…NSAH), 412–490 (GVET…QRNN), 514–573 (ELER…RCRS), 587–616 (WERS…EDPG), 664–688 (PTVS…NPDE), and 754–796 (TLSN…MPRN). Low complexity predominate over residues 319 to 333 (QPSDSTQPQTQSGPS). The span at 350–361 (AFSSVFSGTAGN) shows a compositional bias: polar residues. Positions 428-437 (SSSSMDLLSL) are enriched in low complexity. Composition is skewed to polar residues over residues 443-454 (GSSSSPIYTSAT) and 473-490 (DGTS…QRNN). Positions 590–607 (SGQTSSSSSSQEGPSWPL) are enriched in low complexity. Over residues 754 to 768 (TLSNSQADSQSNNPS) the composition is skewed to polar residues. Residues 775 to 784 (SDGDYEDIEE) show a composition bias toward acidic residues. Short sequence motifs (TQT motif) lie at residues 1109–1111 (TQT) and 1121–1123 (TQT). Disordered regions lie at residues 1120-1142 (ETQT…TSRH) and 1241-1360 (SQTS…LYGR). 2 stretches are compositionally biased toward polar residues: residues 1129-1142 (SAST…TSRH) and 1241-1252 (SQTSVRTAQGGN). A compositionally biased stretch (low complexity) spans 1278–1288 (APGPSGSSGAP). Over residues 1311–1321 (FGDRQPDDVQR) the composition is skewed to basic and acidic residues. The span at 1329–1347 (NMSNHSNNNNNDHSNSYSE) shows a compositional bias: low complexity. A compositionally biased stretch (basic and acidic residues) spans 1348–1360 (SRSRDYPDDLYGR).

Belongs to the WD repeat AMBRA1 family. Component of the DCX(AMBRA1) E3 ubiquitin ligase complex.

It localises to the endoplasmic reticulum. The protein localises to the cytoplasm. The protein resides in the cytoskeleton. Its subcellular location is the cytoplasmic vesicle. It is found in the autophagosome. It localises to the mitochondrion. The protein localises to the cytosol. The protein resides in the nucleus. Its subcellular location is the cell junction. It is found in the focal adhesion. It functions in the pathway protein modification; protein ubiquitination. Substrate-recognition component of a DCX (DDB1-CUL4-X-box) E3 ubiquitin-protein ligase complex involved in cell cycle control and autophagy. The DCX(AMBRA1) complex specifically mediates the polyubiquitination of target proteins. Acts as an upstream master regulator of the transition from G1 to S cell phase: ambra1b specifically recognizes and binds phosphorylated cyclin-D (ccnd1, ccnd2 and ccnd3), leading to cyclin-D ubiquitination by the DCX(AMBRA1) complex and subsequent degradation. Acts as a regulator of Cul5-RING (CRL5) E3 ubiquitin-protein ligase complexes by mediating ubiquitination and degradation of Elongin-C (eloc) component of CRL5 complexes. Acts as a key regulator of autophagy by modulating the BECN1-PIK3C3 complex: controls protein turnover during neuronal development, and regulates normal cell survival and proliferation. In normal conditions, ambra1b is tethered to the cytoskeleton via interaction with dyneins light chains. Upon autophagy induction, ambra1b is released from the cytoskeletal docking site to induce autophagosome nucleation by mediating ubiquitination of proteins involved in autophagy. Also acts as an activator of mitophagy. Required for skeletal muscle development. This Danio rerio (Zebrafish) protein is Activating molecule in BECN1-regulated autophagy protein 1B.